Here is a 271-residue protein sequence, read N- to C-terminus: Glutamate racemase (271 aa).

Substrate-binding positions include 12–13 (DS) and 44–45 (YG). Cys75 (proton donor/acceptor) is an active-site residue. Position 76–77 (76–77 (NT)) interacts with substrate. Cys185 functions as the Proton donor/acceptor in the catalytic mechanism. Residue 186 to 187 (TH) coordinates substrate.

This sequence belongs to the aspartate/glutamate racemases family.

It carries out the reaction L-glutamate = D-glutamate. It functions in the pathway cell wall biogenesis; peptidoglycan biosynthesis. Provides the (R)-glutamate required for cell wall biosynthesis. In Methylococcus capsulatus (strain ATCC 33009 / NCIMB 11132 / Bath), this protein is Glutamate racemase.